The following is a 1033-amino-acid chain: SIT4-associating protein SAP190 (1033 aa).

3 disordered regions span residues 32-82, 147-213, and 768-1033; these read DQDD…TTES, PEII…QVET, and FGND…KEAF. Residues 158 to 170 show a composition bias toward basic and acidic residues; sequence ILIERDRKDKKED. Residues 171–182 are compositionally biased toward acidic residues; sequence AEEGGDSEETTN. Residues 183–195 are compositionally biased toward basic and acidic residues; it reads DSDHDSGDERSVD. Phosphoserine is present on Ser774. 2 stretches are compositionally biased toward acidic residues: residues 784 to 793 and 825 to 838; these read SEDIIGDTEG and ENEE…EYSD. A phosphoserine mark is found at Ser857, Ser862, and Ser892. The segment covering 858-879 has biased composition (basic and acidic residues); that stretch reads DDGKSKSAESEFTDKISEHRDG. A compositionally biased stretch (polar residues) spans 909–924; that stretch reads SRSQPSDPKLQDQNIF. Residues 932–944 show a composition bias toward acidic residues; the sequence is GVGDDDDYMDPND. At Thr990 the chain carries Phosphothreonine. Ser991 carries the post-translational modification Phosphoserine. Over residues 1000–1018 the composition is skewed to acidic residues; sequence ISSDEEDSEDEDEENDMGN.

The protein belongs to the SAPS family. Associates with the SIT4 protein phosphatase catalytic subunit in a cell-cycle-dependent manner. Post-translationally, hyperphosphorylated in the absence of SIT4.

It is found in the cytoplasm. Functionally, positive regulator of protein phosphatase SIT4. Involved in the general amino acid control (GAAC) response regulated by TOR. Involved in the dephosphorylation of the elongator complex subunit IKI3. The chain is SIT4-associating protein SAP190 (SAP190) from Saccharomyces cerevisiae (strain ATCC 204508 / S288c) (Baker's yeast).